Here is a 311-residue protein sequence, read N- to C-terminus: MQQNQEITKKEQYNLNKLQKRLRRNVGQAIADFNMIEEGDRIMVCLSGGKDSYTMLEILRNLQQSAPVKFSLVAVNLDQKQPGFPEHILPEYLEQQGVEYKIVEENTYGIVKDKIPEGKTTCSLCSRLRRGILYRTATELGATKIALGHHRDDILQTLFLNMFYGGKMKGMPPKLMSDDGKHIVIRPLAYCREKDIERFAQAREYPIIPCNLCGSQPNLQRQVIGDMLRDWDKRYPGRIETMFSAMQNVVPSHLSDVELFDFKGIQHGSEVVAGGDLAFDREDIPMQPAGWQPEEDDSQLDEMRLNIVEVK.

The short motif at 47-52 (SGGKDS) is the PP-loop motif element. Positions 122, 125, and 213 each coordinate [4Fe-4S] cluster.

This sequence belongs to the TtcA family. Homodimer. Requires Mg(2+) as cofactor. [4Fe-4S] cluster serves as cofactor.

The protein localises to the cytoplasm. The catalysed reaction is cytidine(32) in tRNA + S-sulfanyl-L-cysteinyl-[cysteine desulfurase] + AH2 + ATP = 2-thiocytidine(32) in tRNA + L-cysteinyl-[cysteine desulfurase] + A + AMP + diphosphate + H(+). Its pathway is tRNA modification. Its function is as follows. Catalyzes the ATP-dependent 2-thiolation of cytidine in position 32 of tRNA, to form 2-thiocytidine (s(2)C32). The sulfur atoms are provided by the cysteine/cysteine desulfurase (IscS) system. This is tRNA-cytidine(32) 2-sulfurtransferase from Enterobacter sp. (strain 638).